Here is a 431-residue protein sequence, read N- to C-terminus: 3-phosphoshikimate 1-carboxyvinyltransferase (431 aa).

The 3-phosphoshikimate site is built by lysine 22, serine 23, and arginine 27. Lysine 22 is a binding site for phosphoenolpyruvate. Glycine 94 and arginine 122 together coordinate phosphoenolpyruvate. Positions 167, 169, 314, and 341 each coordinate 3-phosphoshikimate. Residue glutamine 169 coordinates phosphoenolpyruvate. Aspartate 314 acts as the Proton acceptor in catalysis. Arginine 345 and arginine 391 together coordinate phosphoenolpyruvate.

The protein belongs to the EPSP synthase family. Monomer.

Its subcellular location is the cytoplasm. It catalyses the reaction 3-phosphoshikimate + phosphoenolpyruvate = 5-O-(1-carboxyvinyl)-3-phosphoshikimate + phosphate. It functions in the pathway metabolic intermediate biosynthesis; chorismate biosynthesis; chorismate from D-erythrose 4-phosphate and phosphoenolpyruvate: step 6/7. Catalyzes the transfer of the enolpyruvyl moiety of phosphoenolpyruvate (PEP) to the 5-hydroxyl of shikimate-3-phosphate (S3P) to produce enolpyruvyl shikimate-3-phosphate and inorganic phosphate. This is 3-phosphoshikimate 1-carboxyvinyltransferase from Leuconostoc citreum (strain KM20).